The primary structure comprises 122 residues: Vacuolar transporter chaperone complex subunit 1 (122 aa).

At 1–32 the chain is on the cytoplasmic side; it reads MSTQPLLQTTPGKRIALPVRVEPKVFFANERT. A helical membrane pass occupies residues 33–53; the sequence is FLSWLSFAVVLGGLSVGLLNF. Over 54–59 the chain is Vacuolar; it reads GDRIGK. A helical transmembrane segment spans residues 60 to 80; sequence ISAGLFTIVAIGTMGYALGIY. Topologically, residues 81–101 are cytoplasmic; the sequence is HWRASAIRRRGSGPYDDRLGP. A helical transmembrane segment spans residues 102–122; sequence TILCFVLLAAIITNFVLRMLF.

Belongs to the VTC1 family. As to quaternary structure, the VTC core complex is an integral membrane heterooligomer composed of at least the catalytic subunit vtc4 and the accessory subunits vtc1 and vtc2. vtc1 is a small membrane protein without hydrophilic domain. Vtc2 and vtc4 are related and have 2 hydrophilic domains that face the cytosol, an N-terminal SPX domain and the central core domain. The central core in vtc4 is the catalytic domain. Vtc1 interacts with GTP-bound Ras-like cdc42, which is subsequently inactivated.

The protein resides in the vacuole membrane. Functionally, accessory subunit of the vacuolar transporter chaperone (VTC) complex. The VTC complex acts as a vacuolar polyphosphate polymerase that catalyzes the synthesis of inorganic polyphosphate (polyP) via transfer of phosphate from ATP to a growing polyP chain, releasing ADP. VTC exposes its catalytic domain vtc4 to the cytosol, where the growing polyP chain winds through a tunnel-shaped pocket, integrating cytoplasmic polymer synthesis with polyP membrane translocation. The VTC complex carries 9 vacuolar transmembrane domains, which are likely to constitute the translocation channel into the organelle lumen. PolyP synthesis is tightly coupled to its transport into the vacuole lumen, in order to avoid otherwise toxic intermediates in the cytosol, and it depends on the proton gradient across the membrane, formed by V-ATPase. Vtc1 contributes only 3 transmembrane domains to the complex. The VTC complex also plays a role in vacuolar membrane fusion. Involved in the control of cell polarity. The sequence is that of Vacuolar transporter chaperone complex subunit 1 from Schizosaccharomyces pombe (strain 972 / ATCC 24843) (Fission yeast).